The chain runs to 166 residues: Phospholipase A2 inhibitor A4/A5 (166 aa).

A signal peptide spans Met-1–Gly-19. Residues Leu-46–Glu-161 form the C-type lectin domain. 2 disulfides stabilise this stretch: Cys-83–Cys-160 and Cys-138–Cys-152. N-linked (GlcNAc...) asparagine glycosylation occurs at Asn-122.

Belongs to the alpha-type phospholipase A2 inhibitor family. Homotrimer; non-covalently linked. As to expression, expressed by the liver.

The protein resides in the secreted. Functionally, this phospholipase A2 inhibitor binds directly phospholipase A2 in the presence or absence of calcium. In Crotalus durissus terrificus (South American rattlesnake), this protein is Phospholipase A2 inhibitor A4/A5.